Reading from the N-terminus, the 248-residue chain is 4-hydroxy-tetrahydrodipicolinate reductase (248 aa).

NAD(+) contacts are provided by residues 9–14 (GAKGRV), 77–79 (GTT), and 104–107 (APNF). The active-site Proton donor/acceptor is the H134. H135 serves as a coordination point for (S)-2,3,4,5-tetrahydrodipicolinate. The active-site Proton donor is K138. Position 144-145 (144-145 (GT)) interacts with (S)-2,3,4,5-tetrahydrodipicolinate.

Belongs to the DapB family.

The protein localises to the cytoplasm. It catalyses the reaction (S)-2,3,4,5-tetrahydrodipicolinate + NAD(+) + H2O = (2S,4S)-4-hydroxy-2,3,4,5-tetrahydrodipicolinate + NADH + H(+). The enzyme catalyses (S)-2,3,4,5-tetrahydrodipicolinate + NADP(+) + H2O = (2S,4S)-4-hydroxy-2,3,4,5-tetrahydrodipicolinate + NADPH + H(+). Its pathway is amino-acid biosynthesis; L-lysine biosynthesis via DAP pathway; (S)-tetrahydrodipicolinate from L-aspartate: step 4/4. Functionally, catalyzes the conversion of 4-hydroxy-tetrahydrodipicolinate (HTPA) to tetrahydrodipicolinate. The sequence is that of 4-hydroxy-tetrahydrodipicolinate reductase from Corynebacterium efficiens (strain DSM 44549 / YS-314 / AJ 12310 / JCM 11189 / NBRC 100395).